A 212-amino-acid polypeptide reads, in one-letter code: Holliday junction branch migration complex subunit RuvA (212 aa).

Residues methionine 1–leucine 66 form a domain I region. Residues threonine 67–serine 145 form a domain II region. The interval lysine 146–alanine 162 is flexible linker. Positions alanine 163 to leucine 212 are domain III.

It belongs to the RuvA family. As to quaternary structure, homotetramer. Forms an RuvA(8)-RuvB(12)-Holliday junction (HJ) complex. HJ DNA is sandwiched between 2 RuvA tetramers; dsDNA enters through RuvA and exits via RuvB. An RuvB hexamer assembles on each DNA strand where it exits the tetramer. Each RuvB hexamer is contacted by two RuvA subunits (via domain III) on 2 adjacent RuvB subunits; this complex drives branch migration. In the full resolvosome a probable DNA-RuvA(4)-RuvB(12)-RuvC(2) complex forms which resolves the HJ.

It is found in the cytoplasm. Its function is as follows. The RuvA-RuvB-RuvC complex processes Holliday junction (HJ) DNA during genetic recombination and DNA repair, while the RuvA-RuvB complex plays an important role in the rescue of blocked DNA replication forks via replication fork reversal (RFR). RuvA specifically binds to HJ cruciform DNA, conferring on it an open structure. The RuvB hexamer acts as an ATP-dependent pump, pulling dsDNA into and through the RuvAB complex. HJ branch migration allows RuvC to scan DNA until it finds its consensus sequence, where it cleaves and resolves the cruciform DNA. The protein is Holliday junction branch migration complex subunit RuvA of Leptospira borgpetersenii serovar Hardjo-bovis (strain JB197).